A 609-amino-acid chain; its full sequence is Phosphoprotein 85 (609 aa).

The disordered stretch occupies residues glutamine 461–leucine 609. Positions arginine 465–threonine 478 are enriched in low complexity. Positions proline 484 to leucine 495 are enriched in polar residues. 2 stretches are compositionally biased toward low complexity: residues serine 503–serine 513 and serine 552–serine 563. The segment covering arginine 600 to leucine 609 has biased composition (basic and acidic residues).

Belongs to the herpesviridae pp85 family. In terms of processing, phosphorylated.

It is found in the virion tegument. Its subcellular location is the host cytoplasm. The chain is Phosphoprotein 85 (U14) from Homo sapiens (Human).